The primary structure comprises 261 residues: Cytochrome c oxidase subunit 3 (261 aa).

Topologically, residues 1-15 (MTRQTHAYHMVNPSP) are mitochondrial matrix. The helical transmembrane segment at 16–34 (WPLTGALSALLMTSGLIMW) threads the bilayer. Residues 35 to 40 (FHFNST) are Mitochondrial intermembrane-facing. The helical transmembrane segment at 41–66 (ILLMLGLTTNMLTMYQWWRDVIREST) threads the bilayer. Residues 67-72 (FQGHHT) lie on the Mitochondrial matrix side of the membrane. The helical transmembrane segment at 73–105 (PNVQKGLRYGMILFIISEVLFFTGFFWAFYHSS) threads the bilayer. Topologically, residues 106–128 (LAPTPELGGCWPPTGIHPLNPLE) are mitochondrial intermembrane. The helical transmembrane segment at 129-152 (VPLLNTSVLLASGVSITWAHHSLM) threads the bilayer. At 153–155 (EGN) the chain is on the mitochondrial matrix side. The helical transmembrane segment at 156–183 (RNHMLQALFITIALGVYFTLLQASEYYE) threads the bilayer. At 184-190 (APFTISD) the chain is on the mitochondrial intermembrane side. The chain crosses the membrane as a helical span at residues 191–223 (GVYGSTFFVATGFHGLHVIIGSTFLIVCFFRQL). Residues 224–232 (KFHFTSNHH) lie on the Mitochondrial matrix side of the membrane. The helical transmembrane segment at 233–256 (FGFEAAAWYWHFVDVVWLFLYVSI) threads the bilayer. Over 257–261 (YWWGS) the chain is Mitochondrial intermembrane.

Belongs to the cytochrome c oxidase subunit 3 family. As to quaternary structure, component of the cytochrome c oxidase (complex IV, CIV), a multisubunit enzyme composed of 14 subunits. The complex is composed of a catalytic core of 3 subunits MT-CO1, MT-CO2 and MT-CO3, encoded in the mitochondrial DNA, and 11 supernumerary subunits COX4I, COX5A, COX5B, COX6A, COX6B, COX6C, COX7A, COX7B, COX7C, COX8 and NDUFA4, which are encoded in the nuclear genome. The complex exists as a monomer or a dimer and forms supercomplexes (SCs) in the inner mitochondrial membrane with NADH-ubiquinone oxidoreductase (complex I, CI) and ubiquinol-cytochrome c oxidoreductase (cytochrome b-c1 complex, complex III, CIII), resulting in different assemblies (supercomplex SCI(1)III(2)IV(1) and megacomplex MCI(2)III(2)IV(2)).

The protein localises to the mitochondrion inner membrane. The catalysed reaction is 4 Fe(II)-[cytochrome c] + O2 + 8 H(+)(in) = 4 Fe(III)-[cytochrome c] + 2 H2O + 4 H(+)(out). In terms of biological role, component of the cytochrome c oxidase, the last enzyme in the mitochondrial electron transport chain which drives oxidative phosphorylation. The respiratory chain contains 3 multisubunit complexes succinate dehydrogenase (complex II, CII), ubiquinol-cytochrome c oxidoreductase (cytochrome b-c1 complex, complex III, CIII) and cytochrome c oxidase (complex IV, CIV), that cooperate to transfer electrons derived from NADH and succinate to molecular oxygen, creating an electrochemical gradient over the inner membrane that drives transmembrane transport and the ATP synthase. Cytochrome c oxidase is the component of the respiratory chain that catalyzes the reduction of oxygen to water. Electrons originating from reduced cytochrome c in the intermembrane space (IMS) are transferred via the dinuclear copper A center (CU(A)) of subunit 2 and heme A of subunit 1 to the active site in subunit 1, a binuclear center (BNC) formed by heme A3 and copper B (CU(B)). The BNC reduces molecular oxygen to 2 water molecules using 4 electrons from cytochrome c in the IMS and 4 protons from the mitochondrial matrix. In Eudorcas rufifrons (Red-fronted gazelle), this protein is Cytochrome c oxidase subunit 3 (MT-CO3).